An 815-amino-acid chain; its full sequence is MKFWLQQLGLAVLCASSAAARTAEHAYEFKSVAITGGGYITGIVGHPAEKNLLYARTDIGSTYRWEQELNKWIPLTDFLGPEDENLLGTESVAMDPTDPNRLYLAQGRYLSSNNSAFFVSNDRGATFTRYRAPFPMGANELGRNNGERLAVNPFKPNELWMGTRNAGLMKSSDRAKTWTNVTNFPDAAANGIGITFVIFDPQHEGTIYVGACIPGGLYYTTDGGKNWESIPGQPMQWDPSLLVYPNETQPQSAGPQPMKAVLASNGALYVTYADYPGPWGVAYGAVHVYNTTASIWTDITPNANNTSPKPYTPQAFPAGGYCGLSVAPDDPDTVVVVSLDRDPGPALDSMYLSRDGGKTWKDVSQLSTPPGSGGYWGHPIAEAALSNGTTVPWLSFNWGPQWGGYGAPSPVKGLTKFGWWMTAVLIDPSNPDHVLYGTGATIWATDTIAQADKNLAPKWYIQAQGIEETVTLAMISPREGAHLLSGAGDINGFRHDDLDTPQPMFGLPVFSNLNTLDWAGQRPEVIVRGGPCGHQYPDGCGQAAYSTDGGSEWTKFQTCIKGVNTSVHNPGVMTIDASGKYVVWTSAMYVVSPSVQAVTPPANDSGPYASSDWGKTWTSPRGLTVQTPYISADRVQPKTFYAFSGGVWYVSTDGGLSYDAFNATKLGLPAHTGAVPVVSVDRAGEIWLALGSNGVYHTTDFGKRWKRITHKGTVADLITVGAAAPGSTKPALFIRGSPGHPKKSDYGIYRSDDNGSTWDRVDDDDHRYGGFNLIQGDPRVYGRVYLGTGGRGLLYADIVPGQSDKEGNVPGTGGI.

The N-terminal stretch at 1 to 19 is a signal peptide; it reads MKFWLQQLGLAVLCASSAA. Catalysis depends on Asp58, which acts as the Nucleophile. The N-linked (GlcNAc...) asparagine glycan is linked to Asn113. The BNR 1 repeat unit spans residues 118–128; sequence FVSNDRGATFT. A glycan (N-linked (GlcNAc...) asparagine) is linked at Asn180. One copy of the BNR 2 repeat lies at 218-228; sequence YYTTDGGKNWE. N-linked (GlcNAc...) asparagine glycosylation is found at Asn246, Asn290, and Asn304. One copy of the BNR 3 repeat lies at 351 to 361; it reads YLSRDGGKTWK. The N-linked (GlcNAc...) asparagine glycan is linked to Asn387. Asp489 acts as the Proton donor in catalysis. A BNR 4 repeat occupies 545–555; it reads YSTDGGSEWTK. Asn564 and Asn603 each carry an N-linked (GlcNAc...) asparagine glycan. Residues 649–658 form a BNR 5 repeat; the sequence is YVSTDGGLSY. Asn662 carries an N-linked (GlcNAc...) asparagine glycan. 2 BNR repeats span residues 696 to 706 and 749 to 759; these read YHTTDFGKRWK and YRSDDNGSTWD. A glycan (N-linked (GlcNAc...) asparagine) is linked at Asn754.

The protein belongs to the glycosyl hydrolase 74 family.

It localises to the secreted. The catalysed reaction is Hydrolysis of cellobiose from the reducing end of xyloglucans consisting of a beta-(1-&gt;4)-linked glucan carrying alpha-D-xylosyl groups on O-6 of the glucose residues. To be a substrate, the first residue must be unsubstituted, the second residue may bear a xylosyl group, whether further glycosylated or not, and the third residue, which becomes the new terminus by the action of the enzyme, is preferably xylosylated, but this xylose residue must not be further substituted.. Its function is as follows. Oligoxyloglucan-reducing end-specific xyloglucanase involved in degradation of xyloglucans. Releases the first two glycosyl segments from oligoxyloglucans. Active against cotton xyloglucan, tamarind xyloglucan and tamarind xyloglucan oligomers. The protein is Probable oligoxyloglucan-reducing end-specific xyloglucanase (xgcA) of Neosartorya fischeri (strain ATCC 1020 / DSM 3700 / CBS 544.65 / FGSC A1164 / JCM 1740 / NRRL 181 / WB 181) (Aspergillus fischerianus).